A 501-amino-acid chain; its full sequence is Pentatricopeptide repeat-containing protein At4g14190, chloroplastic (501 aa).

The N-terminal 88 residues, 1-88 (MENLTTAQFL…SGSCPLRLLQ (88 aa)), are a transit peptide targeting the chloroplast. 5 PPR repeats span residues 130–160 (SENN…MIDD), 166–200 (SLEI…GLLP), 201–235 (ITET…GCVR), 236–270 (DHVT…KMTL), and 271–305 (EPST…GISL).

This sequence belongs to the PPR family. P subfamily.

The protein localises to the plastid. It localises to the chloroplast. The sequence is that of Pentatricopeptide repeat-containing protein At4g14190, chloroplastic from Arabidopsis thaliana (Mouse-ear cress).